The chain runs to 209 residues: Uracil phosphoribosyltransferase (209 aa).

Residues Arg-79, Arg-104, and 131–139 (DPMLATGGS) contribute to the 5-phospho-alpha-D-ribose 1-diphosphate site. Uracil is bound by residues Ile-194 and 199 to 201 (GDA). Residue Asp-200 coordinates 5-phospho-alpha-D-ribose 1-diphosphate.

Belongs to the UPRTase family. Requires Mg(2+) as cofactor.

It carries out the reaction UMP + diphosphate = 5-phospho-alpha-D-ribose 1-diphosphate + uracil. It participates in pyrimidine metabolism; UMP biosynthesis via salvage pathway; UMP from uracil: step 1/1. With respect to regulation, allosterically activated by GTP. In terms of biological role, catalyzes the conversion of uracil and 5-phospho-alpha-D-ribose 1-diphosphate (PRPP) to UMP and diphosphate. The sequence is that of Uracil phosphoribosyltransferase from Oceanobacillus iheyensis (strain DSM 14371 / CIP 107618 / JCM 11309 / KCTC 3954 / HTE831).